Reading from the N-terminus, the 299-residue chain is Hemolysin C homolog (299 aa).

CBS domains lie at 80 to 142 (MVPR…NGRL) and 145 to 202 (LIRK…IDDE).

Belongs to the UPF0053 family. Hemolysin C subfamily.

In Rickettsia conorii (strain ATCC VR-613 / Malish 7), this protein is Hemolysin C homolog (tlyC).